The following is a 368-amino-acid chain: 4-hydroxy-3-methylbut-2-en-1-yl diphosphate synthase (flavodoxin) (368 aa).

Cys-268, Cys-271, Cys-303, and Glu-310 together coordinate [4Fe-4S] cluster.

Belongs to the IspG family. Requires [4Fe-4S] cluster as cofactor.

It carries out the reaction (2E)-4-hydroxy-3-methylbut-2-enyl diphosphate + oxidized [flavodoxin] + H2O + 2 H(+) = 2-C-methyl-D-erythritol 2,4-cyclic diphosphate + reduced [flavodoxin]. It functions in the pathway isoprenoid biosynthesis; isopentenyl diphosphate biosynthesis via DXP pathway; isopentenyl diphosphate from 1-deoxy-D-xylulose 5-phosphate: step 5/6. Converts 2C-methyl-D-erythritol 2,4-cyclodiphosphate (ME-2,4cPP) into 1-hydroxy-2-methyl-2-(E)-butenyl 4-diphosphate. This is 4-hydroxy-3-methylbut-2-en-1-yl diphosphate synthase (flavodoxin) from Listeria monocytogenes serotype 4b (strain CLIP80459).